A 349-amino-acid chain; its full sequence is Protein BPS1, chloroplastic (349 aa).

The transit peptide at 1 to 43 (MARPQDPPRGFFPFGNPFKNLSSKNSVLSSKLLPLLNNFETNL) directs the protein to the chloroplast.

Expressed in roots, hypocotyls, cotyledons, leaves, flowers and siliques.

Its subcellular location is the plastid. It localises to the chloroplast. Required for normal root and shoot development. Prevents constitutive production of a root mobile carotenoid-derived signaling compound that is capable of arresting shoot and leaf development. This chain is Protein BPS1, chloroplastic, found in Arabidopsis thaliana (Mouse-ear cress).